Here is a 134-residue protein sequence, read N- to C-terminus: Thyrotropin subunit beta (134 aa).

An N-terminal signal peptide occupies residues 1 to 16; it reads MSPFFMMSLLFGLTFG. 6 cysteine pairs are disulfide-bonded: Cys-22-Cys-72, Cys-36-Cys-87, Cys-39-Cys-125, Cys-47-Cys-103, Cys-51-Cys-105, and Cys-108-Cys-115. Asn-43 is a glycosylation site (N-linked (GlcNAc...) asparagine).

Belongs to the glycoprotein hormones subunit beta family. As to quaternary structure, heterodimer of a common alpha chain and a unique beta chain which confers biological specificity to thyrotropin, lutropin, follitropin and gonadotropin.

Its subcellular location is the secreted. In terms of biological role, indispensable for the control of thyroid structure and metabolism. This Gallus gallus (Chicken) protein is Thyrotropin subunit beta (TSHB).